The chain runs to 155 residues: Small ribosomal subunit protein uS7 (155 aa).

It belongs to the universal ribosomal protein uS7 family. Part of the 30S ribosomal subunit. Contacts proteins S9 and S11.

In terms of biological role, one of the primary rRNA binding proteins, it binds directly to 16S rRNA where it nucleates assembly of the head domain of the 30S subunit. Is located at the subunit interface close to the decoding center, probably blocks exit of the E-site tRNA. The protein is Small ribosomal subunit protein uS7 of Ureaplasma parvum serovar 3 (strain ATCC 27815 / 27 / NCTC 11736).